The following is a 246-amino-acid chain: Vacuolar iron transporter 2 (246 aa).

Topologically, residues 1 to 32 (MVKEFVQDEEKQRLLLDEHTEKHFTAGEVVRD) are cytoplasmic. A helical membrane pass occupies residues 33 to 53 (IIIGVSDGLTVPFALAAGLSG). Residues 54–58 (ANAPS) are Vacuolar-facing. A helical membrane pass occupies residues 59 to 79 (ALVLTAGLAEVAAGAISMGLG). The Cytoplasmic segment spans residues 80–164 (GYLAAKSDAD…PEPRRALMSA (85 aa)). Residues 86–161 (SDADHYHREL…LEKPEPRRAL (76 aa)) are cytoplasmic metal binding domain (MBD). 6 residues coordinate Fe cation: E98, E101, E109, E112, M145, and E149. Residues 165–185 (GTIALAYVVGGLVPLLPYMFV) form a helical membrane-spanning segment. Residues 186 to 190 (PTADR) are Vacuolar-facing. A helical membrane pass occupies residues 191-211 (AMATSVVVTLAALLFFGYVKG). Over 212–218 (RFTGNRP) the chain is Cytoplasmic. A helical transmembrane segment spans residues 219–239 (FISAFQTAVIGALASAAAFGM). At 240-246 (AKAVQSI) the chain is on the vacuolar side.

This sequence belongs to the CCC1 family. As to quaternary structure, homodimer. The dimeric interaction is mediated by both the transmembrane domains (TMDs) and the cytoplasmic metal binding domain (MBD). In terms of tissue distribution, expressed in leaf sheaths and at lower level in leaf blades.

The protein resides in the vacuole membrane. It carries out the reaction Fe(2+)(in) = Fe(2+)(out). Its function is as follows. Vacuolar iron transporter involved in the transfer of iron ions from the cytosol to the vacuole for intracellular iron storage. Vacuolar iron storage is required for seed embryo and seedling development. May be involved in the regulation of iron translocation between flag leaves and seeds. Can transport zinc ions from the cytosol to the vacuole. This Oryza sativa subsp. japonica (Rice) protein is Vacuolar iron transporter 2.